The chain runs to 95 residues: Lipolysis-activating peptide 1-beta chain (95 aa).

The first 22 residues, 1–22 (MISVQVIFIAFISIIAFSMVCG), serve as a signal peptide directing secretion. Positions 23 to 91 (GNVFPNRELG…FLNALEKQCP (69 aa)) constitute an LCN-type CS-alpha/beta domain. Cystine bridges form between cysteine 37–cysteine 60, cysteine 45–cysteine 70, and cysteine 49–cysteine 72.

Homodimer; disulfide-linked or monomer (edited version) or heterodimer of an alpha chain (AC P84810) and this beta chain (non-edited version). Expressed by the venom gland.

It is found in the secreted. In terms of biological role, the homodimer inhibits HMG-CoA reductase (HMGCR) (32% of inhibition produced by 0.6 uM), a glycoprotein involved in the control of cholesterol biosynthesis. The inhibitory effects of bumarsin are seen at much lower concentrations (0.6 uM) than that for statins such as atorvastatin (5 mM) and simvastatin (10 uM). In addition to inhibition of HMG-CoA reductase, this protein lowers cholesterol levels by inducing steroid hormone synthesis via StAR, and by increasing reverse cholesterol transport mediated by the induction of ABCA1 and APOA1. The heterodimer non-edited LVP1 induces lipolysis in rat adipocytes. Induction of lipolysis by LVP1 appears to be mediated through the beta-2 adrenergic receptor pathway (ADRB2). Intracerebroventricular injection is not toxic to mice. Its function is as follows. The monomer edited version, similar to alpha-toxins, may modulate voltage-gated sodium channels (Nav) and may block voltage-gated potassium channels (Kv). The sequence is that of Lipolysis-activating peptide 1-beta chain from Buthus occitanus tunetanus (Common European scorpion).